Here is a 59-residue protein sequence, read N- to C-terminus: Large ribosomal subunit protein uL30 (59 aa).

The protein belongs to the universal ribosomal protein uL30 family. In terms of assembly, part of the 50S ribosomal subunit.

The chain is Large ribosomal subunit protein uL30 from Geotalea daltonii (strain DSM 22248 / JCM 15807 / FRC-32) (Geobacter daltonii).